Consider the following 173-residue polypeptide: ATP synthase subunit b 1 (173 aa).

Residues T15–I37 form a helical membrane-spanning segment.

It belongs to the ATPase B chain family. F-type ATPases have 2 components, F(1) - the catalytic core - and F(0) - the membrane proton channel. F(1) has five subunits: alpha(3), beta(3), gamma(1), delta(1), epsilon(1). F(0) has three main subunits: a(1), b(2) and c(10-14). The alpha and beta chains form an alternating ring which encloses part of the gamma chain. F(1) is attached to F(0) by a central stalk formed by the gamma and epsilon chains, while a peripheral stalk is formed by the delta and b chains.

It localises to the cell inner membrane. In terms of biological role, f(1)F(0) ATP synthase produces ATP from ADP in the presence of a proton or sodium gradient. F-type ATPases consist of two structural domains, F(1) containing the extramembraneous catalytic core and F(0) containing the membrane proton channel, linked together by a central stalk and a peripheral stalk. During catalysis, ATP synthesis in the catalytic domain of F(1) is coupled via a rotary mechanism of the central stalk subunits to proton translocation. Its function is as follows. Component of the F(0) channel, it forms part of the peripheral stalk, linking F(1) to F(0). In Acidiphilium cryptum (strain JF-5), this protein is ATP synthase subunit b 1.